Consider the following 275-residue polypeptide: 4-hydroxy-3-methylbut-2-enyl diphosphate reductase (275 aa).

Residue cysteine 12 coordinates [4Fe-4S] cluster. Positions 40 and 70 each coordinate (2E)-4-hydroxy-3-methylbut-2-enyl diphosphate. Histidine 40 and histidine 70 together coordinate dimethylallyl diphosphate. 2 residues coordinate isopentenyl diphosphate: histidine 40 and histidine 70. [4Fe-4S] cluster is bound at residue cysteine 92. Residue histidine 119 coordinates (2E)-4-hydroxy-3-methylbut-2-enyl diphosphate. Residue histidine 119 coordinates dimethylallyl diphosphate. Histidine 119 is a binding site for isopentenyl diphosphate. Glutamate 121 serves as the catalytic Proton donor. (2E)-4-hydroxy-3-methylbut-2-enyl diphosphate is bound at residue threonine 151. Cysteine 181 contributes to the [4Fe-4S] cluster binding site. (2E)-4-hydroxy-3-methylbut-2-enyl diphosphate is bound by residues serine 209, serine 210, asparagine 211, and serine 251. 4 residues coordinate dimethylallyl diphosphate: serine 209, serine 210, asparagine 211, and serine 251. 4 residues coordinate isopentenyl diphosphate: serine 209, serine 210, asparagine 211, and serine 251.

The protein belongs to the IspH family. It depends on [4Fe-4S] cluster as a cofactor.

It carries out the reaction isopentenyl diphosphate + 2 oxidized [2Fe-2S]-[ferredoxin] + H2O = (2E)-4-hydroxy-3-methylbut-2-enyl diphosphate + 2 reduced [2Fe-2S]-[ferredoxin] + 2 H(+). It catalyses the reaction dimethylallyl diphosphate + 2 oxidized [2Fe-2S]-[ferredoxin] + H2O = (2E)-4-hydroxy-3-methylbut-2-enyl diphosphate + 2 reduced [2Fe-2S]-[ferredoxin] + 2 H(+). The protein operates within isoprenoid biosynthesis; dimethylallyl diphosphate biosynthesis; dimethylallyl diphosphate from (2E)-4-hydroxy-3-methylbutenyl diphosphate: step 1/1. It participates in isoprenoid biosynthesis; isopentenyl diphosphate biosynthesis via DXP pathway; isopentenyl diphosphate from 1-deoxy-D-xylulose 5-phosphate: step 6/6. Functionally, catalyzes the conversion of 1-hydroxy-2-methyl-2-(E)-butenyl 4-diphosphate (HMBPP) into a mixture of isopentenyl diphosphate (IPP) and dimethylallyl diphosphate (DMAPP). Acts in the terminal step of the DOXP/MEP pathway for isoprenoid precursor biosynthesis. This Thermotoga petrophila (strain ATCC BAA-488 / DSM 13995 / JCM 10881 / RKU-1) protein is 4-hydroxy-3-methylbut-2-enyl diphosphate reductase.